The chain runs to 375 residues: MAENEFVKIRRELHKIPELGFQEVKTQRFLLDYINTLPQERLEVKTWKTGLFVKVHGTNPTKTIGYRADIDGLPITEETNYSFQSQHEGLMHACGHDMHMAIGLGVLTYFAQHEIKDNVLFIFQPAEEGPGGAQPMLQSDIMKEWLPDFIFALHVAPEYPVGSIALKEGLLFANTSELFIDLKGKGGHAAYPHTTNDMVVAACQLVSQLQTIVARNVDPLDSAVITVGKIQGGTVQNIIAERARIEGTIRTLSPESMTRVKERIEAIVKGVEVGYQCETAIDYGCMYHQVYNHHEVTREFMEFAKEQTDVDVIECKEAMTGEDFGYMLKDIPGFMFWLGVQSEYGLHHAKLQPHEGAIDIAISLITKYFEHKGNQ.

Aspartate 69 is a catalytic residue. Glutamate 128 (proton acceptor) is an active-site residue.

The protein belongs to the peptidase M20A family. N-acetyldiaminopimelate deacetylase subfamily.

It catalyses the reaction N-acetyl-(2S,6S)-2,6-diaminopimelate + H2O = (2S,6S)-2,6-diaminopimelate + acetate. The protein operates within amino-acid biosynthesis; L-lysine biosynthesis via DAP pathway; LL-2,6-diaminopimelate from (S)-tetrahydrodipicolinate (acetylase route): step 3/3. Catalyzes the conversion of N-acetyl-diaminopimelate to diaminopimelate and acetate. The chain is N-acetyldiaminopimelate deacetylase from Priestia megaterium (strain ATCC 12872 / QMB1551) (Bacillus megaterium).